The primary structure comprises 300 residues: MNSLTKSINLDKVSYPQSTVKDYILLMKPRVMSLVVFTGFSGMWLAPNSLHPFISVIALICIAIGAGSAGAINMWYDRDIDALMKRTQKRPIVRGAIEADEALSFGLIMAFFSVFFMALCVNFLSALLLLFTIFYYICIYTMWLKRSSIQNIVIGGAAGALPPVIGYASVSGSVSLDSVILFLIIFIWTPPHSWALALFCNDDYKNCKVPMMPVIKGALYTKKQILIYSVLLFLTSLMPFFVGMSNIIYLVIAAVLGLVFLYYSISLFYDNADNKQAKRFFAYSIFYLFFIFLLLDFCRV.

A run of 9 helical transmembrane segments spans residues 31–51 (VMSLVVFTGFSGMWLAPNSLH), 52–72 (PFISVIALICIAIGAGSAGAI), 92–112 (IVRGAIEADEALSFGLIMAFF), 123–145 (FLSALLLLFTIFYYICIYTMWLK), 152–172 (IVIGGAAGALPPVIGYASVSG), 179–199 (VILFLIIFIWTPPHSWALALF), 225–245 (ILIYSVLLFLTSLMPFFVGMS), 247–267 (IIYLVIAAVLGLVFLYYSISL), and 280–300 (FFAYSIFYLFFIFLLLDFCRV).

This sequence belongs to the UbiA prenyltransferase family. Protoheme IX farnesyltransferase subfamily.

It is found in the cell inner membrane. It carries out the reaction heme b + (2E,6E)-farnesyl diphosphate + H2O = Fe(II)-heme o + diphosphate. It participates in porphyrin-containing compound metabolism; heme O biosynthesis; heme O from protoheme: step 1/1. Functionally, converts heme B (protoheme IX) to heme O by substitution of the vinyl group on carbon 2 of heme B porphyrin ring with a hydroxyethyl farnesyl side group. The polypeptide is Protoheme IX farnesyltransferase (Rickettsia bellii (strain OSU 85-389)).